The chain runs to 141 residues: General odorant-binding protein 57b (141 aa).

The N-terminal stretch at 1–22 (MFIYRLVFIAPLILLLFSLAKA) is a signal peptide. Disulfide bonds link Cys-39–Cys-77, Cys-73–Cys-120, and Cys-111–Cys-129.

This sequence belongs to the PBP/GOBP family.

Its function is as follows. Present in the aqueous fluid surrounding olfactory sensory dendrites and are thought to aid in the capture and transport of hydrophobic odorants into and through this fluid. This Drosophila melanogaster (Fruit fly) protein is General odorant-binding protein 57b.